Reading from the N-terminus, the 377-residue chain is UDP-N-acetylglucosamine--N-acetylmuramyl-(pentapeptide) pyrophosphoryl-undecaprenol N-acetylglucosamine transferase (377 aa).

UDP-N-acetyl-alpha-D-glucosamine is bound by residues 11-13 (TGG), asparagine 123, arginine 164, serine 194, and glutamine 295.

Belongs to the glycosyltransferase 28 family. MurG subfamily.

It localises to the cell inner membrane. It carries out the reaction di-trans,octa-cis-undecaprenyl diphospho-N-acetyl-alpha-D-muramoyl-L-alanyl-D-glutamyl-meso-2,6-diaminopimeloyl-D-alanyl-D-alanine + UDP-N-acetyl-alpha-D-glucosamine = di-trans,octa-cis-undecaprenyl diphospho-[N-acetyl-alpha-D-glucosaminyl-(1-&gt;4)]-N-acetyl-alpha-D-muramoyl-L-alanyl-D-glutamyl-meso-2,6-diaminopimeloyl-D-alanyl-D-alanine + UDP + H(+). The protein operates within cell wall biogenesis; peptidoglycan biosynthesis. Its function is as follows. Cell wall formation. Catalyzes the transfer of a GlcNAc subunit on undecaprenyl-pyrophosphoryl-MurNAc-pentapeptide (lipid intermediate I) to form undecaprenyl-pyrophosphoryl-MurNAc-(pentapeptide)GlcNAc (lipid intermediate II). This is UDP-N-acetylglucosamine--N-acetylmuramyl-(pentapeptide) pyrophosphoryl-undecaprenol N-acetylglucosamine transferase from Opitutus terrae (strain DSM 11246 / JCM 15787 / PB90-1).